The chain runs to 341 residues: UDP-3-O-acylglucosamine N-acyltransferase (341 aa).

His-241 acts as the Proton acceptor in catalysis.

The protein belongs to the transferase hexapeptide repeat family. LpxD subfamily. Homotrimer.

The catalysed reaction is a UDP-3-O-[(3R)-3-hydroxyacyl]-alpha-D-glucosamine + a (3R)-hydroxyacyl-[ACP] = a UDP-2-N,3-O-bis[(3R)-3-hydroxyacyl]-alpha-D-glucosamine + holo-[ACP] + H(+). The protein operates within bacterial outer membrane biogenesis; LPS lipid A biosynthesis. Its function is as follows. Catalyzes the N-acylation of UDP-3-O-acylglucosamine using 3-hydroxyacyl-ACP as the acyl donor. Is involved in the biosynthesis of lipid A, a phosphorylated glycolipid that anchors the lipopolysaccharide to the outer membrane of the cell. In Mannheimia succiniciproducens (strain KCTC 0769BP / MBEL55E), this protein is UDP-3-O-acylglucosamine N-acyltransferase.